Reading from the N-terminus, the 152-residue chain is UPF0179 protein Mlab_1307 (152 aa).

This sequence belongs to the UPF0179 family.

The sequence is that of UPF0179 protein Mlab_1307 from Methanocorpusculum labreanum (strain ATCC 43576 / DSM 4855 / Z).